Consider the following 884-residue polypeptide: Probable ribonuclease ZC3H12C (884 aa).

The interval 66–108 is disordered; that stretch reads KPTMDTVNSGKEGKGVSEENVSSGDSEGSTSSDHESEQLSSLS. Positions 87-96 are enriched in low complexity; sequence SSGDSEGSTS. A Phosphoserine modification is found at serine 231. One can recognise an RNase NYN domain in the interval 246-401; the sequence is LRPVVIDGSN…LGRHGPSLDN (156 aa). Residues 411–436 form a C3H1-type zinc finger; sequence EHKKQPCPYGKKCTYGHKCKYYHPER. A compositionally biased stretch (polar residues) spans 456 to 478; sequence AAKTTNEGGLVKSNSVPCSTKAD. 3 disordered regions span residues 456–548, 716–739, and 755–776; these read AAKT…SGVH, VGAR…KAPH, and SRLY…EGLG. Over residues 500–516 the composition is skewed to basic and acidic residues; sequence VYQDIEEKLPTKNKLET. The span at 518 to 543 shows a compositional bias: polar residues; it reads SVPSLVSIPATSTAKPQSTTPLSNGL.

Belongs to the ZC3H12 family. Requires Mg(2+) as cofactor.

May function as RNase and regulate the levels of target RNA species. In Mus musculus (Mouse), this protein is Probable ribonuclease ZC3H12C (Zc3h12c).